The sequence spans 200 residues: Dephospho-CoA kinase (200 aa).

Residues 3–200 (VLGLTGSIGM…LSGKPAAATR (198 aa)) enclose the DPCK domain. 11-16 (GMGKTT) serves as a coordination point for ATP.

The protein belongs to the CoaE family.

The protein localises to the cytoplasm. The enzyme catalyses 3'-dephospho-CoA + ATP = ADP + CoA + H(+). It functions in the pathway cofactor biosynthesis; coenzyme A biosynthesis; CoA from (R)-pantothenate: step 5/5. Its function is as follows. Catalyzes the phosphorylation of the 3'-hydroxyl group of dephosphocoenzyme A to form coenzyme A. The chain is Dephospho-CoA kinase from Brucella abortus (strain 2308).